Reading from the N-terminus, the 385-residue chain is Phosphatidate cytidylyltransferase, mitochondrial (385 aa).

The protein belongs to the TAM41 family. Mg(2+) is required as a cofactor. It depends on Co(2+) as a cofactor. The cofactor is Cu(2+).

It is found in the mitochondrion inner membrane. It catalyses the reaction a 1,2-diacyl-sn-glycero-3-phosphate + CTP + H(+) = a CDP-1,2-diacyl-sn-glycerol + diphosphate. Its pathway is phospholipid metabolism; CDP-diacylglycerol biosynthesis; CDP-diacylglycerol from sn-glycerol 3-phosphate: step 3/3. Functionally, catalyzes the formation of CDP-diacylglycerol (CDP-DAG) from phosphatidic acid (PA) in the mitochondrial inner membrane. Required for the biosynthesis of the dimeric phospholipid cardiolipin, which stabilizes supercomplexes of the mitochondrial respiratory chain in the mitochondrial inner membrane. This is Phosphatidate cytidylyltransferase, mitochondrial (TAM41) from Saccharomyces cerevisiae (strain ATCC 204508 / S288c) (Baker's yeast).